The following is a 421-amino-acid chain: ATP-dependent RNA helicase RhlB (421 aa).

The Q motif motif lies at 9–37; it reads QKFSDFALHPKVVEALEKKGFHNCTPIQA. Residues 40-219 enclose the Helicase ATP-binding domain; sequence LPLTLAGRDV…FEQMNNAEYI (180 aa). 53-60 is a binding site for ATP; that stretch reads AQTGTGKT. Positions 165–168 match the DEAD box motif; the sequence is DEAD. The Helicase C-terminal domain maps to 245-390; that stretch reads RLLQTLIEEE…VSKYNPDALM (146 aa). The disordered stretch occupies residues 395-421; sequence KPLRLTRARTGNGPRRTGAPRNRRRSG. Over residues 402-414 the composition is skewed to low complexity; sequence ARTGNGPRRTGAP.

Belongs to the DEAD box helicase family. RhlB subfamily. In terms of assembly, component of the RNA degradosome, which is a multiprotein complex involved in RNA processing and mRNA degradation.

The protein localises to the cytoplasm. The enzyme catalyses ATP + H2O = ADP + phosphate + H(+). In terms of biological role, DEAD-box RNA helicase involved in RNA degradation. Has RNA-dependent ATPase activity and unwinds double-stranded RNA. This is ATP-dependent RNA helicase RhlB from Shigella flexneri serotype 5b (strain 8401).